The sequence spans 399 residues: Endo-1,4-beta-xylanase C (399 aa).

A signal peptide spans M1–A20. Positions Q21–L56 constitute a CBM1 domain. The GH10 domain maps to S81–G396. Catalysis depends on E212, which acts as the Proton donor. The active-site Nucleophile is the E318. C346 and C352 are oxidised to a cystine.

It belongs to the glycosyl hydrolase 10 (cellulase F) family.

It localises to the secreted. It carries out the reaction Endohydrolysis of (1-&gt;4)-beta-D-xylosidic linkages in xylans.. It participates in glycan degradation; xylan degradation. Endo-1,4-beta-xylanase involved in the hydrolysis of xylan, a major structural heterogeneous polysaccharide found in plant biomass representing the second most abundant polysaccharide in the biosphere, after cellulose. This Phanerodontia chrysosporium (White-rot fungus) protein is Endo-1,4-beta-xylanase C (xynC).